We begin with the raw amino-acid sequence, 47 residues long: Protein YpaB (47 aa).

In Escherichia coli (strain K12), this protein is Protein YpaB (ypaB).